Here is an 810-residue protein sequence, read N- to C-terminus: Nuclear pore complex protein NUP88 (810 aa).

Residues 1 to 23 (MKFNFNETEDAPDSRRSPTPKEP) are disordered. The stretch at 646–748 (APNLKRIIDD…RARVKKSTQK (103 aa)) forms a coiled coil.

In terms of assembly, part of the nuclear pore complex (NPC). The NPC has an eight-fold symmetrical structure comprising a central transport channel and two rings, the cytoplasmic and nuclear rings, to which eight filaments are attached. The cytoplasmic filaments have loose ends, while the nuclear filaments are joined in a distal ring, forming a nuclear basket. NPCs are highly dynamic in configuration and composition, and can be devided in 3 subcomplexes, the NUP62 subcomplex, the NUP107-160 subcomplex and the NUP93 subcomplex, containing approximately 30 different nucleoporin proteins.

The protein resides in the nucleus envelope. The protein localises to the nucleus. Its subcellular location is the nuclear pore complex. In terms of biological role, involved in the regulation of exportin-mediated nuclear protein export. Required for resistance mediated by multiple R proteins and for the appropriate nuclear accumulation of SNC1 and of the downstream defense signaling components EDS1 and NPR1. Not involved in salt tolerance, ethylene and auxin responses, but required for systemic acquired resistance. This is Nuclear pore complex protein NUP88 from Arabidopsis thaliana (Mouse-ear cress).